The primary structure comprises 362 residues: MITNKVKTLILVNLGGPRTPSEIEVFLRDLFSDPFVFDLPLPEFLRLRLARFIAKKRAPKVQKSYESMGFGGGSPLVEETAKQAHALELALNERSSEQWNVKVAMACGYPNMRDIEFGKPNQDTVYLPLYPQFSRSTVLSTLAILETKFGECPVGSGGYVPHFGLDPNFHSISAKFIYEFFTNQLPKDQYLHYPEEKPNCDWRNLDLVFSAHGVPMRLIHKGDRYMEEVELSVKGIADELSKFGFNGGVHISYQSKVGPAKWTEPSTIQMISSLAKQGKHIAVYPISFVSDHIETLEEIGEQFKDLTWEMGGKSFVRIPALGIYPSFIQFLAEKVMHSDRKIQHCICREKGGESLQHCRFKD.

Positions 212 and 294 each coordinate Fe cation.

Belongs to the ferrochelatase family.

It localises to the cytoplasm. The enzyme catalyses heme b + 2 H(+) = protoporphyrin IX + Fe(2+). Its pathway is porphyrin-containing compound metabolism; protoheme biosynthesis; protoheme from protoporphyrin-IX: step 1/1. Its function is as follows. Catalyzes the ferrous insertion into protoporphyrin IX. The polypeptide is Ferrochelatase (Leptospira biflexa).